Reading from the N-terminus, the 394-residue chain is ATP phosphoribosyltransferase regulatory subunit (394 aa).

The protein belongs to the class-II aminoacyl-tRNA synthetase family. HisZ subfamily. As to quaternary structure, heteromultimer composed of HisG and HisZ subunits.

It is found in the cytoplasm. Its pathway is amino-acid biosynthesis; L-histidine biosynthesis; L-histidine from 5-phospho-alpha-D-ribose 1-diphosphate: step 1/9. Its function is as follows. Required for the first step of histidine biosynthesis. May allow the feedback regulation of ATP phosphoribosyltransferase activity by histidine. The polypeptide is ATP phosphoribosyltransferase regulatory subunit (Geobacillus kaustophilus (strain HTA426)).